A 171-amino-acid chain; its full sequence is ATP synthase subunit b (171 aa).

Residues phenylalanine 2–leucine 22 traverse the membrane as a helical segment.

Belongs to the ATPase B chain family. As to quaternary structure, F-type ATPases have 2 components, F(1) - the catalytic core - and F(0) - the membrane proton channel. F(1) has five subunits: alpha(3), beta(3), gamma(1), delta(1), epsilon(1). F(0) has three main subunits: a(1), b(2) and c(10-14). The alpha and beta chains form an alternating ring which encloses part of the gamma chain. F(1) is attached to F(0) by a central stalk formed by the gamma and epsilon chains, while a peripheral stalk is formed by the delta and b chains.

Its subcellular location is the cell inner membrane. Its function is as follows. F(1)F(0) ATP synthase produces ATP from ADP in the presence of a proton or sodium gradient. F-type ATPases consist of two structural domains, F(1) containing the extramembraneous catalytic core and F(0) containing the membrane proton channel, linked together by a central stalk and a peripheral stalk. During catalysis, ATP synthesis in the catalytic domain of F(1) is coupled via a rotary mechanism of the central stalk subunits to proton translocation. Component of the F(0) channel, it forms part of the peripheral stalk, linking F(1) to F(0). This chain is ATP synthase subunit b, found in Helicobacter pylori (strain HPAG1).